The sequence spans 561 residues: Transmembrane protein 151B (561 aa).

Residues 1 to 10 (MSPPGSAAGE) are compositionally biased toward low complexity. The segment at 1 to 42 (MSPPGSAAGESAGGGGGGGGSGVPEEPMASADEGPAREEQRP) is disordered. The segment covering 11–22 (SAGGGGGGGGSG) has biased composition (gly residues). A run of 2 helical transmembrane segments spans residues 59–79 (CLLL…CHVT) and 106–126 (YVYI…VECW). Positions 489–507 (VNEASCPTEQTRLSSQASM) are enriched in polar residues. The disordered stretch occupies residues 489–523 (VNEASCPTEQTRLSSQASMRDNEEDEDEEEAGPPP). Positions 510 to 519 (NEEDEDEEEA) are enriched in acidic residues.

It belongs to the TMEM151 family.

It localises to the membrane. The polypeptide is Transmembrane protein 151B (Tmem151b) (Mus musculus (Mouse)).